Here is a 98-residue protein sequence, read N- to C-terminus: uncharacterized protein (98 aa).

A signal peptide spans 1–23 (MKKMQSIVLALSLVLVAPMAAQA). A disordered region spans residues 68–98 (WHLHGPPPPPRHHKKAPHDHHGGHGPGKHHR). A compositionally biased stretch (basic residues) spans 77–98 (PRHHKKAPHDHHGGHGPGKHHR).

To E.coli YpeC.

This is an uncharacterized protein from Escherichia coli (strain K12).